Consider the following 70-residue polypeptide: uncharacterized protein (70 aa).

Residues 14-34 (CLVVWFACVYSLLILVVLLLI) traverse the membrane as a helical segment.

The protein resides in the virion membrane. This is an uncharacterized protein from Homo sapiens (Human).